The following is a 405-amino-acid chain: Ubiquitin-like modifier-activating enzyme 5 (405 aa).

Residues 1–44 (MATVEELQTRVKQLEEELERERTRNRGGTDGGGGRKKIDQMSSE) form a disordered region. Basic and acidic residues predominate over residues 7-24 (LQTRVKQLEEELERERTR). Positions 81, 102, 125, 148, and 182 each coordinate ATP. Residues Cys-224 and Cys-227 each contribute to the Zn(2+) site. Cys-248 serves as the catalytic Glycyl thioester intermediate. Zn(2+)-binding residues include Cys-301 and Cys-306. Residues 346–377 (AETTEEELKAASHGHVPELVEGVHVAYVRPMT) form a linker region. The short motif at 390-405 (DDQESLEDLMAKMKSI) is the UFC1-binding sequence (UFC) element.

Belongs to the ubiquitin-activating E1 family. UBA5 subfamily. In terms of assembly, homodimer; homodimerization is required for UFM1 activation. Interacts (via UIS motif) with UFM1; binds UFM1 via a trans-binding mechanism in which UFM1 interacts with distinct sites in both subunits of the UBA5 homodimer. Interacts (via C-terminus) with UFC1.

It localises to the cytoplasm. It is found in the nucleus. Its subcellular location is the endoplasmic reticulum membrane. The protein localises to the golgi apparatus. In terms of biological role, E1-like enzyme which specifically catalyzes the first step in ufmylation. Activates UFM1 by first adenylating its C-terminal glycine residue with ATP, and thereafter linking this residue to the side chain of a cysteine residue in E1, yielding a UFM1-E1 thioester and free AMP. Activates UFM1 via a trans-binding mechanism, in which UFM1 interacts with distinct sites in both subunits of the UBA5 homodimer. Trans-binding also promotes stabilization of the UBA5 homodimer, and enhances ATP-binding. Transfer of UFM1 from UBA5 to the E2-like enzyme UFC1 also takes place using a trans mechanism. The chain is Ubiquitin-like modifier-activating enzyme 5 from Branchiostoma floridae (Florida lancelet).